Consider the following 217-residue polypeptide: ATP-dependent Clp protease proteolytic subunit 2 (217 aa).

The active-site Nucleophile is S113. H138 is a catalytic residue.

The protein belongs to the peptidase S14 family. Fourteen ClpP subunits assemble into 2 heptameric rings which stack back to back to give a disk-like structure with a central cavity, resembling the structure of eukaryotic proteasomes.

Its subcellular location is the cytoplasm. It carries out the reaction Hydrolysis of proteins to small peptides in the presence of ATP and magnesium. alpha-casein is the usual test substrate. In the absence of ATP, only oligopeptides shorter than five residues are hydrolyzed (such as succinyl-Leu-Tyr-|-NHMec, and Leu-Tyr-Leu-|-Tyr-Trp, in which cleavage of the -Tyr-|-Leu- and -Tyr-|-Trp bonds also occurs).. Functionally, cleaves peptides in various proteins in a process that requires ATP hydrolysis. Has a chymotrypsin-like activity. Plays a major role in the degradation of misfolded proteins. This chain is ATP-dependent Clp protease proteolytic subunit 2, found in Frankia casuarinae (strain DSM 45818 / CECT 9043 / HFP020203 / CcI3).